Here is a 362-residue protein sequence, read N- to C-terminus: Spermidine/putrescine import ATP-binding protein PotA (362 aa).

The ABC transporter domain maps to 4–235; it reads IKLDHITKQY…PVNDFVARFI (232 aa). 37 to 44 contributes to the ATP binding site; sequence GPSGSGKT.

It belongs to the ABC transporter superfamily. Spermidine/putrescine importer (TC 3.A.1.11.1) family. In terms of assembly, the complex is composed of two ATP-binding proteins (PotA), two transmembrane proteins (PotB and PotC) and a solute-binding protein (PotD).

The protein localises to the cell membrane. It carries out the reaction ATP + H2O + polyamine-[polyamine-binding protein]Side 1 = ADP + phosphate + polyamineSide 2 + [polyamine-binding protein]Side 1.. In terms of biological role, part of the ABC transporter complex PotABCD involved in spermidine/putrescine import. Responsible for energy coupling to the transport system. The chain is Spermidine/putrescine import ATP-binding protein PotA from Lactobacillus delbrueckii subsp. bulgaricus (strain ATCC BAA-365 / Lb-18).